A 449-amino-acid polypeptide reads, in one-letter code: Tryptophan synthase beta chain 2 (449 aa).

Lys-116 carries the post-translational modification N6-(pyridoxal phosphate)lysine.

Belongs to the TrpB family. In terms of assembly, tetramer of two alpha and two beta chains. The cofactor is pyridoxal 5'-phosphate.

The catalysed reaction is (1S,2R)-1-C-(indol-3-yl)glycerol 3-phosphate + L-serine = D-glyceraldehyde 3-phosphate + L-tryptophan + H2O. It functions in the pathway amino-acid biosynthesis; L-tryptophan biosynthesis; L-tryptophan from chorismate: step 5/5. Functionally, the beta subunit is responsible for the synthesis of L-tryptophan from indole and L-serine. The protein is Tryptophan synthase beta chain 2 (trpB2) of Aeropyrum pernix (strain ATCC 700893 / DSM 11879 / JCM 9820 / NBRC 100138 / K1).